Consider the following 132-residue polypeptide: Small ribosomal subunit protein uS11 (132 aa).

It belongs to the universal ribosomal protein uS11 family. In terms of assembly, part of the 30S ribosomal subunit.

Located on the platform of the 30S subunit. The sequence is that of Small ribosomal subunit protein uS11 from Sulfolobus acidocaldarius (strain ATCC 33909 / DSM 639 / JCM 8929 / NBRC 15157 / NCIMB 11770).